A 347-amino-acid polypeptide reads, in one-letter code: MSVMFDPDTAIYPFPPKPTPLSIDEKAYYREKIKRLLKERNAVMVAHYYTDPEIQQLAEETGGCISDSLEMARFGAKHPASTLLVAGVRFMGETAKILSPEKTILMPTLQAECSLDLGCPVEEFNAFCDAHPDRTVVVYANTSAAVKARADWVVTSSIAVELIDHLDSLGEKIIWAPDKHLGRYVQKQTGGDILCWQGACIVHDEFKTQALTRLQEEYPDAAILVHPESPQAIVDMADAVGSTSQLIAAAKTLPHQRLIVATDRGIFYKMQQAVPDKELLEAPTAGEGATCRSCAHCPWMAMNDLQAIAEALEQEGSNHEVHVDERLRERALVPLNRMLDFAATLRG.

Iminosuccinate contacts are provided by His47 and Ser68. Cys113 is a [4Fe-4S] cluster binding site. Iminosuccinate-binding positions include 139-141 (YAN) and Ser156. Cys200 provides a ligand contact to [4Fe-4S] cluster. Iminosuccinate is bound by residues 226–228 (HPE) and Thr243. Cys297 is a [4Fe-4S] cluster binding site.

Belongs to the quinolinate synthase family. Type 1 subfamily. [4Fe-4S] cluster is required as a cofactor.

Its subcellular location is the cytoplasm. The enzyme catalyses iminosuccinate + dihydroxyacetone phosphate = quinolinate + phosphate + 2 H2O + H(+). Its pathway is cofactor biosynthesis; NAD(+) biosynthesis; quinolinate from iminoaspartate: step 1/1. Catalyzes the condensation of iminoaspartate with dihydroxyacetone phosphate to form quinolinate. This chain is Quinolinate synthase, found in Shigella boydii serotype 4 (strain Sb227).